The sequence spans 137 residues: Large ribosomal subunit protein uL22 (137 aa).

This sequence belongs to the universal ribosomal protein uL22 family. Part of the 50S ribosomal subunit.

Functionally, this protein binds specifically to 23S rRNA; its binding is stimulated by other ribosomal proteins, e.g. L4, L17, and L20. It is important during the early stages of 50S assembly. It makes multiple contacts with different domains of the 23S rRNA in the assembled 50S subunit and ribosome. The globular domain of the protein is located near the polypeptide exit tunnel on the outside of the subunit, while an extended beta-hairpin is found that lines the wall of the exit tunnel in the center of the 70S ribosome. The polypeptide is Large ribosomal subunit protein uL22 (Flavobacterium johnsoniae (strain ATCC 17061 / DSM 2064 / JCM 8514 / BCRC 14874 / CCUG 350202 / NBRC 14942 / NCIMB 11054 / UW101) (Cytophaga johnsonae)).